The sequence spans 387 residues: Phosphoglycerate kinase (387 aa).

Substrate-binding positions include 21 to 23 (DLN), Arg36, 59 to 62 (HLGR), Arg113, and Arg146. Residues Lys197, Glu314, and 340 to 343 (GGDT) each bind ATP.

It belongs to the phosphoglycerate kinase family. Monomer.

It localises to the cytoplasm. It carries out the reaction (2R)-3-phosphoglycerate + ATP = (2R)-3-phospho-glyceroyl phosphate + ADP. It functions in the pathway carbohydrate degradation; glycolysis; pyruvate from D-glyceraldehyde 3-phosphate: step 2/5. The sequence is that of Phosphoglycerate kinase from Enterobacter sp. (strain 638).